A 189-amino-acid polypeptide reads, in one-letter code: Movement protein p22 (189 aa).

It belongs to the tombusvirus/aureusvirus movement protein p22 family. In terms of assembly, interacts with host protein HFI22. Phosphorylated.

It is found in the host membrane. Functionally, cell-to-cell movement. Displays RNA-binding activity. This Capsicum annuum (Capsicum pepper) protein is Movement protein p22.